Here is a 340-residue protein sequence, read N- to C-terminus: Protein RecA (340 aa).

65-72 (GPESGGKT) is an ATP binding site.

This sequence belongs to the RecA family.

The protein localises to the cytoplasm. Its function is as follows. Can catalyze the hydrolysis of ATP in the presence of single-stranded DNA, the ATP-dependent uptake of single-stranded DNA by duplex DNA, and the ATP-dependent hybridization of homologous single-stranded DNAs. It interacts with LexA causing its activation and leading to its autocatalytic cleavage. This chain is Protein RecA, found in Thermus aquaticus.